We begin with the raw amino-acid sequence, 200 residues long: UPF0637 protein LCK_01372 (200 aa).

Belongs to the UPF0637 family.

The sequence is that of UPF0637 protein LCK_01372 from Leuconostoc citreum (strain KM20).